Reading from the N-terminus, the 255-residue chain is Small ribosomal subunit protein uS10m (255 aa).

A mitochondrion-targeting transit peptide spans 1-32; sequence MALPAARSALSARAFIRPAAALNAAASSSRYL. 2 disordered regions span residues 30–52 and 220–255; these read RYLS…NSET and SEGE…AKSS. Positions 236–255 are enriched in basic and acidic residues; it reads DAAREEKPAEKLKEEEAKSS.

The protein belongs to the universal ribosomal protein uS10 family. As to quaternary structure, part of the mitochondrial small ribosomal subunit.

The protein localises to the mitochondrion. Functionally, involved in mitochondrial genome encoded proteins translation. Involved in the binding of tRNA to the ribosomes. The protein is Small ribosomal subunit protein uS10m (RSM10) of Cryptococcus neoformans var. neoformans serotype D (strain B-3501A) (Filobasidiella neoformans).